The following is a 175-amino-acid chain: Small ribosomal subunit protein uS7 (175 aa).

This sequence belongs to the universal ribosomal protein uS7 family. In terms of assembly, part of the 30S ribosomal subunit. Contacts proteins S9 and S11.

Its function is as follows. One of the primary rRNA binding proteins, it binds directly to 16S rRNA where it nucleates assembly of the head domain of the 30S subunit. Is located at the subunit interface close to the decoding center, probably blocks exit of the E-site tRNA. This Neorickettsia sennetsu (strain ATCC VR-367 / Miyayama) (Ehrlichia sennetsu) protein is Small ribosomal subunit protein uS7.